Reading from the N-terminus, the 441-residue chain is MGADAIQTNGHDQAKLTGGEEIQRLRCFVKNYEWGKLGPESLVARLQEANTGQRVDSEIPYAEFWMGTHESGPSHVEFGSGHGVSDKCMVTLKSWVLDNPNLLGSKVVDKWGCDLPFLFKVLSVTKALSIQAHPNKALAEKLHREDPLLYRDNNHKPEIALAVTPFQALCGFVTLKELKEVITNVPEITELVGSKAADQIFNVHEHDEDERIKSVVRLIFTQLMSASNNETKQVVSRMKNRLLLETKHRELSEKEKLVLELEKQYTGDIGVISAFFFNYVKLNPGEALYLDANEPHAYISGDCVECMAASDNVVRAGLTPKHRDVQTLCSMLTYKLGYPEILKGFPLTPYVTRYLPPFDEFEVDHCDLPRGKSTVFPAVPGPSVYLVIEGKGQLRTGSSKVLVNRGDVLFVPADIEIHVTGESDVMKLYRAGVSSRFFQTL.

Zn(2+) contacts are provided by Gln-131, His-133, Glu-158, and His-296. Arg-315 is a catalytic residue.

The protein belongs to the mannose-6-phosphate isomerase type 1 family. Zn(2+) serves as cofactor. As to expression, not expressed in any organs under light (at protein level).

The catalysed reaction is D-mannose 6-phosphate = D-fructose 6-phosphate. The protein operates within nucleotide-sugar biosynthesis; GDP-alpha-D-mannose biosynthesis; alpha-D-mannose 1-phosphate from D-fructose 6-phosphate: step 1/2. With respect to regulation, inhibited by EDTA, Zn(2+), Cd(2+), DTT, p-chloromercuribenzoate and L-ascorbic acid (AsA). Functionally, involved in the synthesis of the GDP-mannose and dolichol-phosphate-mannose required for a number of critical mannosyl transfer reactions. The sequence is that of Mannose-6-phosphate isomerase 2 (PMI2) from Arabidopsis thaliana (Mouse-ear cress).